Reading from the N-terminus, the 580-residue chain is NADH-ubiquinone oxidoreductase chain 5 (580 aa).

A run of 16 helical transmembrane segments spans residues 12–32, 50–70, 92–112, 113–133, 153–173, 176–196, 218–240, 249–269, 274–294, 300–320, 343–363, 378–400, 427–447, 464–484, 500–520, and 560–580; these read FYILIFISFTLFILSLKFLLM, IVMTFLFDWMSLMFMSFVLLI, ILLVLMFVMSMMMLIISPNLI, SILLGWDGLGLVSYCLVIYFQ, VALLLAIAWMLNYGSWNYIFY, MMKNNFEMMVIGGLVMLAAMT, SALVHSSTLVTAGVYLLIRFNIL, FLLLVSGLTMFMAGLGANFEF, IIALSTLSQLGLMMSILSIGY, FHLLTHALFKALLFMCAGVII, CSCFNIANLALCGMPFLAGFY, NFFSFFLFFFSTGLTVCYSFRLV, IFFLMVMAIIGGSMLSWLMFF, MVCLLGGFTGYLISNVNFFFI, MWFMPLISTVGVVKWPLILGM, and IYLLSYMLWVIILVSMMLFLN.

Belongs to the complex I subunit 5 family.

Its subcellular location is the mitochondrion inner membrane. The catalysed reaction is a ubiquinone + NADH + 5 H(+)(in) = a ubiquinol + NAD(+) + 4 H(+)(out). Functionally, core subunit of the mitochondrial membrane respiratory chain NADH dehydrogenase (Complex I) that is believed to belong to the minimal assembly required for catalysis. Complex I functions in the transfer of electrons from NADH to the respiratory chain. The immediate electron acceptor for the enzyme is believed to be ubiquinone. The protein is NADH-ubiquinone oxidoreductase chain 5 of Aedes aegypti (Yellowfever mosquito).